Here is a 564-residue protein sequence, read N- to C-terminus: Dihydropyrimidinase-related protein 5 (564 aa).

Phosphothreonine is present on residues Thr509 and Thr514. Ser532 and Ser538 each carry phosphoserine. Arg559 is modified (omega-N-methylarginine).

It belongs to the metallo-dependent hydrolases superfamily. Hydantoinase/dihydropyrimidinase family. As to quaternary structure, homotetramer, and heterotetramer with other DPYS-like proteins. Interacts with DPYSL2, DPYSL3 and DPYSL4. Interacts with MAP2 and TUBB3. As to expression, highly expressed in embryonic and early postnatal brain and spinal cord.

It localises to the cytoplasm. In terms of biological role, involved in the negative regulation of dendrite outgrowth. In Rattus norvegicus (Rat), this protein is Dihydropyrimidinase-related protein 5 (Dpysl5).